The primary structure comprises 657 residues: Glycogen debranching enzyme (657 aa).

Asp334 serves as the catalytic Nucleophile. The Proton donor role is filled by Glu369. The segment at 458–485 (ANGEQNRDGTNSNFSFNHGTEGLEADET) is disordered. Residues 465-475 (DGTNSNFSFNH) are compositionally biased toward polar residues.

This sequence belongs to the glycosyl hydrolase 13 family.

The protein localises to the cytoplasm. The enzyme catalyses Hydrolysis of (1-&gt;6)-alpha-D-glucosidic linkages to branches with degrees of polymerization of three or four glucose residues in limit dextrin.. Its pathway is glycan degradation; glycogen degradation. Its activity is regulated as follows. Slightly activated by Ca(2+). Inhibited by divalent cations such as Zn(2+), Cu(2+), Fe(2+), Mg(2+), Mn(2+), but only slightly inhibited by EDTA. Functionally, removes maltotriose and maltotetraose chains that are attached by 1,6-alpha-linkage to the limit dextrin main chain, generating a debranched limit dextrin. Hydrolyzes the alpha-1,6-glycosidic linkages in amylopectin while does not hydrolyze the alpha-1,4-glycosidic linkages in amylose. Native glycogen is a poor substrate. The chain is Glycogen debranching enzyme from Dickeya chrysanthemi (Pectobacterium chrysanthemi).